The chain runs to 816 residues: Sucrose synthase 2 (816 aa).

Serine 15 carries the phosphoserine modification. The tract at residues 280-757 (MVFNVVILSP…GLQRIEEKYT (478 aa)) is GT-B glycosyltransferase.

Belongs to the glycosyltransferase 1 family. Plant sucrose synthase subfamily.

The catalysed reaction is an NDP-alpha-D-glucose + D-fructose = a ribonucleoside 5'-diphosphate + sucrose + H(+). In terms of biological role, sucrose-cleaving enzyme that provides UDP-glucose and fructose for various metabolic pathways. The sequence is that of Sucrose synthase 2 (SUS1) from Zea mays (Maize).